A 163-amino-acid polypeptide reads, in one-letter code: Probable protein tyrosine phosphatase type IVA B (163 aa).

Residues 10-161 form the Tyrosine-protein phosphatase domain; that stretch reads TIIESSTHKF…YKASKKAGCK (152 aa). A disulfide bridge connects residues Cys-49 and Cys-104. The Proton donor role is filled by Asp-70. Residue Cys-104 is the Phosphocysteine intermediate of the active site. 105–110 contributes to the phosphate binding site; the sequence is IAGLGR. A substrate-binding site is contributed by Arg-110. The residue at position 160 (Cys-160) is a Cysteine methyl ester. The S-farnesyl cysteine moiety is linked to residue Cys-160. A propeptide spans 161–163 (removed in mature form); it reads KIM.

The protein belongs to the protein-tyrosine phosphatase family.

The protein resides in the membrane. It carries out the reaction O-phospho-L-tyrosyl-[protein] + H2O = L-tyrosyl-[protein] + phosphate. This Dictyostelium discoideum (Social amoeba) protein is Probable protein tyrosine phosphatase type IVA B.